The sequence spans 465 residues: Argininosuccinate lyase (465 aa).

The protein belongs to the lyase 1 family. Argininosuccinate lyase subfamily.

It is found in the cytoplasm. It carries out the reaction 2-(N(omega)-L-arginino)succinate = fumarate + L-arginine. The protein operates within amino-acid biosynthesis; L-arginine biosynthesis; L-arginine from L-ornithine and carbamoyl phosphate: step 3/3. This chain is Argininosuccinate lyase, found in Clostridium botulinum (strain Eklund 17B / Type B).